The primary structure comprises 236 residues: MIEFGKRATPQSAADAVRGDSGMASGMSAGAMATLAQSAASTHAYYDTTFSRRAMKVLPGEYSVTTEDLMLVTVLGSCVSACVRDKTLGIGGMNHFMLPSRNEGESILSPSMRYGTHAMEVLLNQLYKAGAKRERLEIKVFGGAAVLAGMSTLDVGERNGKFVLEFLRNEGLTVAAKDLFDVHPRKVYFVPSTGQIMVRKLRSQNSAAELDSEAQYASKLSKSITTKPASRLQLFT.

The tract at residues 1 to 20 (MIEFGKRATPQSAADAVRGD) is disordered.

Belongs to the CheD family.

The catalysed reaction is L-glutaminyl-[protein] + H2O = L-glutamyl-[protein] + NH4(+). Functionally, probably deamidates glutamine residues to glutamate on methyl-accepting chemotaxis receptors (MCPs), playing an important role in chemotaxis. The sequence is that of Probable chemoreceptor glutamine deamidase CheD from Ralstonia pickettii (strain 12J).